We begin with the raw amino-acid sequence, 351 residues long: LETM1 domain-containing protein 1 (351 aa).

The Cytoplasmic portion of the chain corresponds to 1 to 130 (MLSGMALCRT…FRRDIIKAAP (130 aa)). A helical membrane pass occupies residues 131 to 151 (VVIISIPPFANYLVFVLMYFF). Topologically, residues 152–351 (PRQLLIRHFW…SANYLQSIKQ (200 aa)) are mitochondrial intermembrane. Positions 172–351 (IYHRMRVEAY…SANYLQSIKQ (180 aa)) constitute a Letm1 RBD domain.

It localises to the mitochondrion outer membrane. The protein localises to the nucleus. It is found in the mitochondrion inner membrane. Functionally, may play an essential role for mitochondrial structure and function. The protein is LETM1 domain-containing protein 1 of Xenopus tropicalis (Western clawed frog).